A 365-amino-acid chain; its full sequence is Decapping nuclease RAI1 (365 aa).

Glu165 contributes to the a divalent metal cation binding site. The substrate site is built by Cys197 and Glu214. The a divalent metal cation site is built by Asp216, Glu234, and Leu235. Residues Lys236 and Gln260 each coordinate substrate.

Belongs to the DXO/Dom3Z family. In terms of assembly, interacts with rat1; the interaction is direct, stabilizes rat1 protein structure and stimulates its exoribonuclease activity. The interaction also stimulates rai1 pyrophosphohydrolase activity, probably by recruiting it to mRNA substrates. A divalent metal cation serves as cofactor.

Its subcellular location is the nucleus. The catalysed reaction is a 5'-end NAD(+)-phospho-ribonucleoside in mRNA + H2O = a 5'-end phospho-ribonucleoside in mRNA + NAD(+) + H(+). It carries out the reaction a 5'-end (N(7)-methyl 5'-triphosphoguanosine)-ribonucleoside-ribonucleotide in mRNA + H2O = a (N(7)-methyl 5'-triphosphoguanosine)-nucleoside + a 5'-end phospho-ribonucleoside in mRNA + H(+). The enzyme catalyses a 5'-end triphospho-ribonucleoside in mRNA + H2O = a 5'-end phospho-ribonucleoside in mRNA + diphosphate + H(+). Its function is as follows. Decapping enzyme for NAD-capped RNAs: specifically hydrolyzes the nicotinamide adenine dinucleotide (NAD) cap from a subset of RNAs by removing the entire NAD moiety from the 5'-end of an NAD-capped RNA. The NAD-cap is present at the 5'-end of some RNAs and snoRNAs. In contrast to the canonical 5'-end N7 methylguanosine (m7G) cap, the NAD cap promotes mRNA decay. Also acts as a non-canonical decapping enzyme that removes the entire cap structure of m7G capped or incompletely capped RNAs. Has decapping activity toward incomplete 5'-end m7G cap mRNAs such as unmethylated 5'-end-capped RNA (cap0), while it has no activity toward 2'-O-ribose methylated m7G cap (cap1). Also possesses RNA 5'-pyrophosphohydrolase activity by hydrolyzing the 5'-end triphosphate to release pyrophosphates. Stimulates exoribonuclease activity of Rat1, allowing it to degrade RNAs with stable secondary structure more effectively. This Aspergillus fumigatus (strain ATCC MYA-4609 / CBS 101355 / FGSC A1100 / Af293) (Neosartorya fumigata) protein is Decapping nuclease RAI1 (rai1).